Here is a 433-residue protein sequence, read N- to C-terminus: Histidinol dehydrogenase (433 aa).

The NAD(+) site is built by tyrosine 129, glutamine 191, and asparagine 214. Residues serine 237, glutamine 259, and histidine 262 each coordinate substrate. 2 residues coordinate Zn(2+): glutamine 259 and histidine 262. Active-site proton acceptor residues include glutamate 326 and histidine 327. Histidine 327, aspartate 360, glutamate 414, and histidine 419 together coordinate substrate. Aspartate 360 serves as a coordination point for Zn(2+). Residue histidine 419 coordinates Zn(2+).

This sequence belongs to the histidinol dehydrogenase family. Requires Zn(2+) as cofactor.

It catalyses the reaction L-histidinol + 2 NAD(+) + H2O = L-histidine + 2 NADH + 3 H(+). It functions in the pathway amino-acid biosynthesis; L-histidine biosynthesis; L-histidine from 5-phospho-alpha-D-ribose 1-diphosphate: step 9/9. Its function is as follows. Catalyzes the sequential NAD-dependent oxidations of L-histidinol to L-histidinaldehyde and then to L-histidine. This chain is Histidinol dehydrogenase, found in Methanosarcina barkeri (strain Fusaro / DSM 804).